The primary structure comprises 86 residues: uncharacterized protein (86 aa).

It localises to the mitochondrion. This is an uncharacterized protein from Marchantia polymorpha (Common liverwort).